A 239-amino-acid polypeptide reads, in one-letter code: Phosphoribosylaminoimidazole-succinocarboxamide synthase (239 aa).

It belongs to the SAICAR synthetase family.

The enzyme catalyses 5-amino-1-(5-phospho-D-ribosyl)imidazole-4-carboxylate + L-aspartate + ATP = (2S)-2-[5-amino-1-(5-phospho-beta-D-ribosyl)imidazole-4-carboxamido]succinate + ADP + phosphate + 2 H(+). Its pathway is purine metabolism; IMP biosynthesis via de novo pathway; 5-amino-1-(5-phospho-D-ribosyl)imidazole-4-carboxamide from 5-amino-1-(5-phospho-D-ribosyl)imidazole-4-carboxylate: step 1/2. In Bacillus thuringiensis subsp. konkukian (strain 97-27), this protein is Phosphoribosylaminoimidazole-succinocarboxamide synthase.